We begin with the raw amino-acid sequence, 496 residues long: L-arabinose isomerase (496 aa).

4 residues coordinate Mn(2+): glutamate 302, glutamate 329, histidine 346, and histidine 445.

Belongs to the arabinose isomerase family. Mn(2+) serves as cofactor.

The enzyme catalyses beta-L-arabinopyranose = L-ribulose. Its pathway is carbohydrate degradation; L-arabinose degradation via L-ribulose; D-xylulose 5-phosphate from L-arabinose (bacterial route): step 1/3. Its function is as follows. Catalyzes the conversion of L-arabinose to L-ribulose. This chain is L-arabinose isomerase, found in Thermotoga petrophila (strain ATCC BAA-488 / DSM 13995 / JCM 10881 / RKU-1).